Reading from the N-terminus, the 279-residue chain is Putative polysaccharide deacetylase YxkH (279 aa).

The first 19 residues, 1-19 (MKRLFLSIFLLGSCLALAA), serve as a signal peptide directing secretion. Cys-20 carries the N-palmitoyl cysteine lipid modification. The S-diacylglycerol cysteine moiety is linked to residue Cys-20. A disordered region spans residues 29–51 (QPMPKAEQKKPEKKAVQVQKKED). The segment covering 34–51 (AEQKKPEKKAVQVQKKED) has biased composition (basic and acidic residues). The region spanning 119-279 (KCVLITFDDG…AFGAYIESMK (161 aa)) is the NodB homology domain.

This sequence belongs to the polysaccharide deacetylase family.

It localises to the cell membrane. The protein is Putative polysaccharide deacetylase YxkH (yxkH) of Bacillus subtilis (strain 168).